The chain runs to 191 residues: Oleosin 20.3 kDa (191 aa).

At A2 the chain carries N-acetylalanine. The segment at 2–54 (ANVDRDRRVHVDRTDKRVHQPNYEDDVGFGGYGGYGAGSDYKSRGPSTNQILA) is polar. 2 helical membrane-spanning segments follow: residues 52-72 (ILALIAGVPIGGTLLTLAGLT) and 99-119 (LTIGLAVTGILASGLFGLTGL). The interval 55 to 128 (LIAGVPIGGT…LSSVSWVLNY (74 aa)) is hydrophobic.

It belongs to the oleosin family.

Its subcellular location is the lipid droplet. It is found in the membrane. Functionally, may have a structural role to stabilize the lipid body during desiccation of the seed by preventing coalescence of the oil. Probably interacts with both lipid and phospholipid moieties of lipid bodies. May also provide recognition signals for specific lipase anchorage in lipolysis during seedling growth. This chain is Oleosin 20.3 kDa (OL2), found in Arabidopsis thaliana (Mouse-ear cress).